A 187-amino-acid polypeptide reads, in one-letter code: Ribosome-recycling factor (187 aa).

Residues 141 to 169 form a disordered region; that stretch reads LKKGNKNGDFNDDEFHDLEKKVQNETDAG.

Belongs to the RRF family.

The protein resides in the cytoplasm. Its function is as follows. Responsible for the release of ribosomes from messenger RNA at the termination of protein biosynthesis. May increase the efficiency of translation by recycling ribosomes from one round of translation to another. The sequence is that of Ribosome-recycling factor from Limosilactobacillus reuteri (strain DSM 20016) (Lactobacillus reuteri).